The chain runs to 62 residues: Photosystem II reaction center protein Z (62 aa).

A run of 2 helical transmembrane segments spans residues 8–28 (AVFA…VVFA) and 41–61 (FSGT…NSLI).

Belongs to the PsbZ family. PSII is composed of 1 copy each of membrane proteins PsbA, PsbB, PsbC, PsbD, PsbE, PsbF, PsbH, PsbI, PsbJ, PsbK, PsbL, PsbM, PsbT, PsbY, PsbZ, Psb30/Ycf12, at least 3 peripheral proteins of the oxygen-evolving complex and a large number of cofactors. It forms dimeric complexes.

The protein resides in the plastid. The protein localises to the chloroplast thylakoid membrane. Functionally, may control the interaction of photosystem II (PSII) cores with the light-harvesting antenna, regulates electron flow through the 2 photosystem reaction centers. PSII is a light-driven water plastoquinone oxidoreductase, using light energy to abstract electrons from H(2)O, generating a proton gradient subsequently used for ATP formation. This is Photosystem II reaction center protein Z from Pelargonium hortorum (Common geranium).